A 295-amino-acid chain; its full sequence is Putative aquaporin-12B (295 aa).

At 1 to 22 (MAGLNVSLSFFFATFTLCEAAR) the chain is on the cytoplasmic side. The chain crosses the membrane as a helical span at residues 23–41 (RASKALLPVGAYEVFAREA). Over 42-55 (MRTLVELGPWAGDF) the chain is Extracellular. A helical transmembrane segment spans residues 56-74 (GPDLLLTLLFLLFLAHGVT). Topologically, residues 75-76 (LD) are cytoplasmic. The discontinuously helical intramembrane region spans 77–114 (GASANPTVSLQEFLMAEESLPGTLLKLAAQGLGMQAAC). Positions 81 to 83 (NPT) match the NPA 1 motif. The Cytoplasmic portion of the chain corresponds to 115–120 (TLTRLC). A helical membrane pass occupies residues 121–142 (WAWELSDLHLLQSLMAQSCSSA). The Extracellular portion of the chain corresponds to 143–145 (LRT). The chain crosses the membrane as a helical span at residues 146-166 (SVPHGALVEAACAFCFHLTLL). At 167 to 174 (HLRHSPPA) the chain is on the cytoplasmic side. A helical membrane pass occupies residues 175-191 (YSGPAVALLVTVTAYTA). Over 192–194 (GPF) the chain is Extracellular. Positions 195-206 (TSAFFNPALAAS) form an intramembrane region, discontinuously helical. An NPA 2 motif is present at residues 200–202 (NPA). The Extracellular portion of the chain corresponds to 207–223 (VTFACSGHTLLEYVQVY). The chain crosses the membrane as a helical span at residues 224–244 (WLGPLTGMVLAVLLHQGRLPH). Residues 245–295 (LFQRNLFYGQKNKYRAPRGKPAPASGDTQTPAKGSSVREPGRSGVEGPHSS) are Cytoplasmic-facing. Residues 257-295 (KYRAPRGKPAPASGDTQTPAKGSSVREPGRSGVEGPHSS) form a disordered region.

Belongs to the MIP/aquaporin (TC 1.A.8) family. AQP11/AQP12 subfamily. Homotetramer; each monomer provides an independent water pore.

The protein resides in the membrane. It catalyses the reaction H2O(in) = H2O(out). In terms of biological role, putative aquaporin. Could form homotetrameric transmembrane channels, with each monomer independently mediating water transport across the plasma membrane along its osmotic gradient. The protein is Putative aquaporin-12B of Homo sapiens (Human).